A 256-amino-acid chain; its full sequence is MASISSFGCFPQSTALAGTSSTTRCRTTVAARLADQSDDFAPLRSSGGNCGCVNNSGEFDRRKLLVSSVGLLIGALSYDSKDGDFASASQFADMPALKGKDYGKTKMKYPDYTETQSGLQYKDLRVGTGPIAKKGDKVVVDWDGYTIGYYGRIFEARNKTKGGSFEGDDKEFFKFTLGSNEVIPAFEEAVSGMALGGIRRIIVPPELGYPDNDYNKSGPRPMTFSGQRALDFVLRNQGLIDKTLLFDVELLKIVPN.

The N-terminal 29 residues, 1–29 (MASISSFGCFPQSTALAGTSSTTRCRTTV), are a transit peptide targeting the chloroplast. A thylakoid-targeting transit peptide spans 30 to 88 (AARLADQSDDFAPLRSSGGNCGCVNNSGEFDRRKLLVSSVGLLIGALSYDSKDGDFASA). Residues 135–254 (GDKVVVDWDG…LFDVELLKIV (120 aa)) enclose the PPIase FKBP-type domain. Ser-164 is modified (phosphoserine).

This sequence belongs to the FKBP-type PPIase family.

The protein localises to the plastid. The protein resides in the chloroplast thylakoid lumen. It catalyses the reaction [protein]-peptidylproline (omega=180) = [protein]-peptidylproline (omega=0). PPIases accelerate the folding of proteins. It catalyzes the cis-trans isomerization of proline imidic peptide bonds in oligopeptides. This is Peptidyl-prolyl cis-trans isomerase FKBP19, chloroplastic (FKBP19) from Arabidopsis thaliana (Mouse-ear cress).